The sequence spans 180 residues: UPF0227 protein YcfP (180 aa).

This sequence belongs to the UPF0227 family.

This Escherichia coli O139:H28 (strain E24377A / ETEC) protein is UPF0227 protein YcfP.